The chain runs to 195 residues: BH3-interacting domain death agonist (195 aa).

M1 carries the post-translational modification N-acetylmethionine. The segment covering 58-69 has biased composition (polar residues); it reads TDGSQASRSFNQ. The disordered stretch occupies residues 58–77; that stretch reads TDGSQASRSFNQGRIEPDSE. Phosphoserine is present on S78. The BH3 motif lies at 87–100; the sequence is ARHLAQIGDEMDHN.

In terms of assembly, forms heterodimers either with the pro-apoptotic protein BAX or the anti-apoptotic protein BCL2. Interacts with PLEKHN1. As to quaternary structure, interacts with ITCH. Interacts with MTCH2. Post-translationally, TNF-alpha induces caspase-mediated cleavage into a major p15 and minor p13 and p11 products. Cleaved by CASP6 into a major p15 and minor p13 products, leading to release of cytochrome c and subsequent nonalcoholic steatohepatitis. In terms of processing, ubiquitinated by ITCH; ubiquitination results in proteasome-dependent degradation.

Its subcellular location is the cytoplasm. The protein localises to the mitochondrion membrane. It localises to the mitochondrion outer membrane. Induces caspases and apoptosis. Counters the protective effect of BCL2. Functionally, induces caspase activation and apoptosis. Allows the release of cytochrome c. This Mus musculus (Mouse) protein is BH3-interacting domain death agonist (Bid).